The following is a 96-amino-acid chain: Small ribosomal subunit protein bS16m (96 aa).

It belongs to the bacterial ribosomal protein bS16 family. As to quaternary structure, component of the mitochondrial small ribosomal subunit (mt-SSU). Mature yeast 74S mitochondrial ribosomes consist of a small (37S) and a large (54S) subunit. The 37S small subunit contains a 15S ribosomal RNA (15S mt-rRNA) and at least 32 different proteins. The 54S large subunit contains a 21S rRNA (21S mt-rRNA) and at least 45 different proteins.

It localises to the mitochondrion. Its function is as follows. Component of the mitochondrial ribosome (mitoribosome), a dedicated translation machinery responsible for the synthesis of mitochondrial genome-encoded proteins, including at least some of the essential transmembrane subunits of the mitochondrial respiratory chain. The mitoribosomes are attached to the mitochondrial inner membrane and translation products are cotranslationally integrated into the membrane. The protein is Small ribosomal subunit protein bS16m (mrps16) of Schizosaccharomyces pombe (strain 972 / ATCC 24843) (Fission yeast).